Reading from the N-terminus, the 896-residue chain is MRHLIFTGFVLTLTALEAVNVAKSTDNDIVLKVSTEKHSSRDSHHFSGEWLESPWGDLYQFRAGDQNWLTAREHCLSLNADLAAIRNVEQLDWILSHYAPLSSRFAQRLVQIGLYAPEGQTHEWKWLNGNEINKTLLWSSGEPYDHSMEGRERCGLLNVEKRVLDDVDCESTSPDHHAQRYICQRTSENHKQQQRSNNYIWQKIENLFSFFGIGGSPTPHNATIPNDYEDEVLKNETSATVKSTVKFSDSEEETSSEEEESVSKTLAALPKIEGSGESTALKELQEPEGSGQIVEKKAIETTGDLVSGVDEEKLDKMINKMEEMIKSIDDLTVPPAVLERTTVSTVVLKKEEIVKQEKTDEKKVEDKKETLANELNDNKISESIEGDFDQAQSKDMPKADIEPPKEEDCDEEGSGSGSGEEDEKDESSEKIELAPEKEDKIKEFLGVLRLFLDRAEHGDLRKLLDDQSGKTLLERMKNAVREANRREFEMLEKLENSKKSEEEKEELAKKDQMSTEEQKDLYKKISSAVMKAAKIHKIEEADKVQDEQAMEKFNIAKVKADSEEAESEGTVEVLKSAKEGKAEIKEKVGNDDYYGDYLDDNNVIKIQNREKKDAKEESSSDDKKSTDEKKKEIKKIEKTNKVNHDEPKKEEKKNEEQVKETKLESSTTVAKKEDVTTVASTTEEPKSDKDSEGSGSDIEESTVSSAKPAEAEENEAELEASGHEEVSTTTESTTVAVKEVPVDEIEKIAKLEAKQHTEDEKVTVETKQETAVTPAPTTSEKTSTTAAPSTKPAEETTTTTEAPSTTTKPVTVAVKKVSPEEMEKLVKKESTEKVTLLPPLPTFTFPTLAPFTFPTLPTLATTKPSPAPKVPTLEEILGNLNDQFKKLLSPPKPLPK.

Residues 1 to 18 form the signal peptide; sequence MRHLIFTGFVLTLTALEA. The region spanning 54 to 178 is the C-type lectin domain; the sequence is PWGDLYQFRA…CESTSPDHHA (125 aa). Asn-133 is a glycosylation site (N-linked (GlcNAc...) asparagine). The cysteines at positions 154 and 169 are disulfide-linked. N-linked (GlcNAc...) asparagine glycosylation is found at Asn-221 and Asn-235. 4 disordered regions span residues 243–264, 354–436, 492–519, and 557–809; these read STVK…SVSK, VKQE…LAPE, EKLE…EEQK, and KVKA…TTKP. Positions 250–260 are enriched in acidic residues; that stretch reads SEEETSSEEEE. 2 stretches are compositionally biased toward basic and acidic residues: residues 354 to 382 and 395 to 406; these read VKQE…KISE and DMPKADIEPPKE. Over residues 407-426 the composition is skewed to acidic residues; it reads EDCDEEGSGSGSGEEDEKDE. Residues 427-436 are compositionally biased toward basic and acidic residues; it reads SSEKIELAPE. Basic and acidic residues-rich tracts occupy residues 575 to 590, 607 to 663, and 683 to 692; these read KSAK…KVGN, QNRE…ETKL, and EEPKSDKDSE. A compositionally biased stretch (low complexity) spans 727-739; it reads STTTESTTVAVKE. Positions 740–768 are enriched in basic and acidic residues; that stretch reads VPVDEIEKIAKLEAKQHTEDEKVTVETKQ. Residues 773–809 show a composition bias toward low complexity; sequence TPAPTTSEKTSTTAAPSTKPAEETTTTTEAPSTTTKP.

The protein localises to the secreted. The chain is C-type lectin domain-containing protein 180 (clec-180) from Caenorhabditis elegans.